Here is a 407-residue protein sequence, read N- to C-terminus: Dual-specificity RNA methyltransferase RlmN (407 aa).

E136 (proton acceptor) is an active-site residue. The Radical SAM core domain maps to 144–378 (REDRGAVCIS…MDAGFASPIR (235 aa)). An intrachain disulfide couples C151 to C389. Residues C158, C162, and C165 each contribute to the [4Fe-4S] cluster site. S-adenosyl-L-methionine is bound by residues 215–216 (GE), S247, 269–271 (SLH), and N346. C389 serves as the catalytic S-methylcysteine intermediate.

Belongs to the radical SAM superfamily. RlmN family. [4Fe-4S] cluster serves as cofactor.

It localises to the cytoplasm. It carries out the reaction adenosine(2503) in 23S rRNA + 2 reduced [2Fe-2S]-[ferredoxin] + 2 S-adenosyl-L-methionine = 2-methyladenosine(2503) in 23S rRNA + 5'-deoxyadenosine + L-methionine + 2 oxidized [2Fe-2S]-[ferredoxin] + S-adenosyl-L-homocysteine. The catalysed reaction is adenosine(37) in tRNA + 2 reduced [2Fe-2S]-[ferredoxin] + 2 S-adenosyl-L-methionine = 2-methyladenosine(37) in tRNA + 5'-deoxyadenosine + L-methionine + 2 oxidized [2Fe-2S]-[ferredoxin] + S-adenosyl-L-homocysteine. Functionally, specifically methylates position 2 of adenine 2503 in 23S rRNA and position 2 of adenine 37 in tRNAs. m2A2503 modification seems to play a crucial role in the proofreading step occurring at the peptidyl transferase center and thus would serve to optimize ribosomal fidelity. In Gluconobacter oxydans (strain 621H) (Gluconobacter suboxydans), this protein is Dual-specificity RNA methyltransferase RlmN.